The following is a 127-amino-acid chain: Dual endothelin-1/VEGF signal peptide receptor (127 aa).

Residues 1–69 (MSTFYVTAVP…EMKSRWNWGS (69 aa)) lie on the Extracellular side of the membrane. A helical transmembrane segment spans residues 70–88 (ITCIMCFTCVGSQLSMSSS). At 89–127 (KASNFSGPLQLYQRGIGHITNPYRRPPAPAWPCSSSGTT) the chain is on the cytoplasmic side.

As to expression, prominently expressed in brain and heart tissues. Weakly expressed in aorta, adrenal gland, and lung tissues.

The protein resides in the cell membrane. Functionally, in the Dahl salt-resistant strain, acts as a dual receptor for both endothelin-1 and the signal sequence of vascular endothelial growth factor A and does not act as a receptor for angiotensin-2. Does not bind the VEGFA mature protein. In the Dahl salt-sensitive strain, acts as a dual endothelin-1/angiotensin-2 receptor that is functionally coupled to a calcium-mobilizing transduction system, responding equivalently to both endothelin-1/EDN1 and angiotensin-2 peptides in a highly specific manner. May play a role in angiogenesis with a significant role in cardiovascular and neural development. This Rattus norvegicus (Rat) protein is Dual endothelin-1/VEGF signal peptide receptor.